The chain runs to 448 residues: Tryptophan--tRNA ligase (448 aa).

Residues 10 to 12 and 18 to 19 contribute to the ATP site; these read TPT and GN. The 'HIGH' region signature appears at 11 to 19; that stretch reads PTGTPHLGN. Asp-143 contacts L-tryptophan. ATP contacts are provided by residues 155–157, Leu-197, and 204–208; these read GRD and KMSKS. Positions 204 to 208 match the 'KMSKS' region motif; it reads KMSKS.

It belongs to the class-I aminoacyl-tRNA synthetase family. As to quaternary structure, homodimer.

Its subcellular location is the cytoplasm. It catalyses the reaction tRNA(Trp) + L-tryptophan + ATP = L-tryptophyl-tRNA(Trp) + AMP + diphosphate + H(+). Its function is as follows. Catalyzes the attachment of tryptophan to tRNA(Trp). In Pseudomonas aeruginosa (strain ATCC 15692 / DSM 22644 / CIP 104116 / JCM 14847 / LMG 12228 / 1C / PRS 101 / PAO1), this protein is Tryptophan--tRNA ligase.